The primary structure comprises 150 residues: Putative TBC1 domain family member 29 (150 aa).

A Rab-GAP TBC; truncated domain is found at Met-1–Gly-43. Residues Glu-102–Gln-111 are compositionally biased toward polar residues. The segment at Glu-102–Gly-125 is disordered.

The protein is Putative TBC1 domain family member 29 of Homo sapiens (Human).